The sequence spans 67 residues: Large ribosomal subunit protein bL35 (67 aa).

This sequence belongs to the bacterial ribosomal protein bL35 family.

The chain is Large ribosomal subunit protein bL35 from Bartonella henselae (strain ATCC 49882 / DSM 28221 / CCUG 30454 / Houston 1) (Rochalimaea henselae).